Consider the following 106-residue polypeptide: Thioredoxin-like protein YusE (106 aa).

A Thioredoxin domain is found at 1–101; that stretch reads MKELQEHELD…LYELIKQKSS (101 aa). A disulfide bond links Cys26 and Cys29.

This Bacillus subtilis (strain 168) protein is Thioredoxin-like protein YusE (yusE).